Consider the following 120-residue polypeptide: Large ribosomal subunit protein uL18 (120 aa).

Positions 1–10 are enriched in basic and acidic residues; the sequence is MKRTRTESVQ. A disordered region spans residues 1-24; the sequence is MKRTRTESVQRRHSRIRRKVEGTP.

The protein belongs to the universal ribosomal protein uL18 family. In terms of assembly, part of the 50S ribosomal subunit; part of the 5S rRNA/L5/L18/L25 subcomplex. Contacts the 5S and 23S rRNAs.

This is one of the proteins that bind and probably mediate the attachment of the 5S RNA into the large ribosomal subunit, where it forms part of the central protuberance. This chain is Large ribosomal subunit protein uL18, found in Gloeothece citriformis (strain PCC 7424) (Cyanothece sp. (strain PCC 7424)).